We begin with the raw amino-acid sequence, 346 residues long: MAATPDKGKALELALAQIDKQYGKGSVMRLGDETRAPIEVIPTGSISLDVALGIGGLPRGRIVEVYGPESSGKTSVALHAVANAQKLGGTAAFIDAEHALDPEYAKAIGVDTDSLLVSQPDTGEQALEIADMLIRSGALDIIVIDSVAALVPRAEIEGEMGDSHVGLQARLMSQALRKLTSALYNAKTTAIFINQLREKVGVMFGSPETTTGGKALKFYSSVRLDVRRIETLKDGSDAVGNRTRVKVVKNKVAPPFKQAEFDIIYGIGISREGSLIDMGVEQGIIRKSGAWYTYEGDQLGQGKENARKFMRENPDVANEIEKRIKEKLGIGAQVDAETADPAPVDF.

67–74 (GPESSGKT) is an ATP binding site.

The protein belongs to the RecA family.

It is found in the cytoplasm. In terms of biological role, can catalyze the hydrolysis of ATP in the presence of single-stranded DNA, the ATP-dependent uptake of single-stranded DNA by duplex DNA, and the ATP-dependent hybridization of homologous single-stranded DNAs. It interacts with LexA causing its activation and leading to its autocatalytic cleavage. In Saccharopolyspora erythraea (strain ATCC 11635 / DSM 40517 / JCM 4748 / NBRC 13426 / NCIMB 8594 / NRRL 2338), this protein is Protein RecA.